The sequence spans 304 residues: Protease HtpX homolog (304 aa).

The next 2 helical transmembrane spans lie at 19 to 39 (FIVFIIYFLLFFVCYAVVSYF) and 41 to 61 (LGEIGIIIAFLIVLFTNYYAY). H146 contributes to the Zn(2+) binding site. E147 is an active-site residue. Position 150 (H150) interacts with Zn(2+). A run of 2 helical transmembrane segments spans residues 156–176 (VRLQTIAAVMVGLIVILGDGL) and 192–212 (NILGIVSLIIAILAPFLATLL). E221 lines the Zn(2+) pocket.

Belongs to the peptidase M48B family. Zn(2+) serves as cofactor.

The protein resides in the cell inner membrane. The polypeptide is Protease HtpX homolog (Dictyoglomus turgidum (strain DSM 6724 / Z-1310)).